The sequence spans 1671 residues: AF4/FMR2 family member lilli (1671 aa).

Disordered stretches follow at residues 53-79 (YSQN…QQGI), 126-304 (SAPG…EKDV), 393-599 (LAGE…SNKW), 723-761 (DSGT…QLPG), 774-1162 (PTQS…TTPH), and 1185-1311 (KLTP…LQIG). The segment covering 70–79 (REKIERQQGI) has biased composition (basic and acidic residues). Composition is skewed to low complexity over residues 145 to 179 (SLGH…QQQQ) and 210 to 242 (PSSS…SSGG). Phosphothreonine is present on threonine 416. The span at 424–437 (LKTEKNHSLEKQDS) shows a compositional bias: basic and acidic residues. The span at 439 to 450 (LENDLELSESED) shows a compositional bias: acidic residues. Residues serine 446 and serine 448 each carry the phosphoserine modification. The segment covering 459-479 (SAGNSSNSSESDSSESGSESS) has biased composition (low complexity). Positions 487 to 496 (HPNHQQHHHQ) are enriched in basic residues. Composition is skewed to low complexity over residues 497–522 (LQQQ…PQPL) and 561–587 (PAGV…GSSS). Residues 588 to 599 (NKTPSPTESNKW) show a composition bias toward polar residues. Positions 723-755 (DSGTSASGSSSSSSSSSDSAVGGEVVPMPGPGE) are enriched in low complexity. Over residues 774 to 786 (PTQSQKAPPSNSV) the composition is skewed to polar residues. A compositionally biased stretch (basic residues) spans 800–810 (QRQKKPRKKKA). Residues serine 819 and serine 820 each carry the phosphoserine modification. The segment at residues 849–861 (KKGRGRPRKQQQS) is a DNA-binding region (a.T hook). Residues 858–896 (QQQSGGSGNLSSASAGSSSQTKGPTLTAAKKPLAKTPLA) show a composition bias toward low complexity. Residues serine 869 and serine 871 each carry the phosphoserine modification. Positions 907-917 (SQSSSNGNTPT) are enriched in polar residues. Low complexity-rich tracts occupy residues 947 to 963 (SSSA…SSSS) and 988 to 1002 (ALLG…SSGS). Residues 1009 to 1020 (SRSQVGSGQALA) show a composition bias toward polar residues. A compositionally biased stretch (low complexity) spans 1032–1058 (SQHSQHLSSSECSSSSGGCTAVCSSSS). Residues 1063–1080 (EGRREKERERKPKSDKNK) show a composition bias toward basic and acidic residues. Over residues 1120–1130 (QPPPPHAPPAA) the composition is skewed to pro residues. Positions 1188–1203 (PAQQNGHLTPKDQATN) are enriched in polar residues. Composition is skewed to basic and acidic residues over residues 1224 to 1241 (EHPV…EAKF) and 1250 to 1280 (FQLK…EQPP). Serine 1360 bears the Phosphoserine mark. Phosphothreonine is present on threonine 1362. Over residues 1562-1581 (NTPSSISPSNSVGSQGSGSN) the composition is skewed to low complexity. A disordered region spans residues 1562–1586 (NTPSSISPSNSVGSQGSGSNTPPGR).

The protein belongs to the AF4 family.

It localises to the nucleus. Its function is as follows. Has a role in transcriptional regulation. Acts in parallel with the Ras/MAPK and the PI3K/PKB pathways in the control of cell identity and cellular growth. Essential for regulation of the cytoskeleton and cell growth but not for cell proliferation or growth rate. Required specifically for the microtubule-based basal transport of lipid droplets. Plays a partially redundant function downstream of Raf in cell fate specification in the developing eye. Pair-rule protein that regulates embryonic cellularization, gastrulation and segmentation. The protein is AF4/FMR2 family member lilli of Drosophila yakuba (Fruit fly).